The chain runs to 883 residues: N,N'-diacetylchitobiase (883 aa).

A signal peptide spans methionine 1–glycine 17. Cysteine 18 carries the N-palmitoyl cysteine lipid modification. Cysteine 18 carries the S-diacylglycerol cysteine lipid modification. 3 disulfides stabilise this stretch: cysteine 54–cysteine 64, cysteine 394–cysteine 402, and cysteine 502–cysteine 577. Glutamate 537 (proton donor) is an active-site residue.

The protein belongs to the glycosyl hydrolase 20 family. Post-translationally, this protein is probably a lipoprotein, its processing is inhibited by globomycin.

Its subcellular location is the cell outer membrane. The catalysed reaction is Hydrolysis of terminal non-reducing N-acetyl-D-hexosamine residues in N-acetyl-beta-D-hexosaminides.. The protein operates within glycan degradation; chitin degradation. Its function is as follows. Hydrolysis of terminal, non-reducing N-acetyl-beta-D-glucosamine residues in chitobiose and higher analogs, and in glycoproteins. This Vibrio harveyi (Beneckea harveyi) protein is N,N'-diacetylchitobiase (chb).